The following is a 550-amino-acid chain: Hydroxylamine reductase (550 aa).

C3, C6, C18, and C25 together coordinate [2Fe-2S] cluster. Hybrid [4Fe-2O-2S] cluster contacts are provided by H249, E273, C317, C405, C433, C458, E492, and K494. A Cysteine persulfide modification is found at C405.

Belongs to the HCP family. It depends on [2Fe-2S] cluster as a cofactor. The cofactor is hybrid [4Fe-2O-2S] cluster.

The protein localises to the cytoplasm. It carries out the reaction A + NH4(+) + H2O = hydroxylamine + AH2 + H(+). Its function is as follows. Catalyzes the reduction of hydroxylamine to form NH(3) and H(2)O. This chain is Hydroxylamine reductase, found in Salmonella gallinarum (strain 287/91 / NCTC 13346).